We begin with the raw amino-acid sequence, 736 residues long: MAIVALGVVYGDIGTSPLYTAQTFLAGQGGLGSVDREAVLGMLSLVFWSITLITTVKYVLIAMRIDNNGEGGIFALYSLIRKYGAWLAIPAMLGGAAFLADSVLTPAVSISSAVEGLQTLPPLEGLFDENPSLTLMITVVIIVILFSVQSRGTESIGKVFGSMVLVWFGFLAIVGVTNLSNDWSVFEALNPVYGIKFLFSPNNAAGIALMGTVFLSTTGAEALYSDMGHVGRGNIYFTWPFIKVALVLNYFGQGAWMLANSDNPQYTAMESLNPFFQMMSPNVRYLAVILSVSAGVIASQALITGAFTMVSEATRLNWMPHLQVRYPARTRGQLYIPVVNGVLCVSTLAVLAIFKDSEHISAAYGLALTITMITTTVLLGVYLWHSGKRVGAIVFTVLFLAIQAMFFIASMAKFLHGGWFTMLLTAAILFVMYTWNEGTKLERAQRRHMRPNDFLPALDKLHSDFRIPYFADNIVYLTSDSETKRLDTDIFFSIFADHPKRARAWWAVSVETTDEPFTREYSVEDFGTNYIYRVRFRLGFKVSQSIPAYIHQIMHDLSKTGELPKQKSIYPKVDADPDIGTIRYVLIHKALMPESKVSARGALSLQAKYAIRHMAGSPVKWFGLAPYNPLVEVQPLFVSTRRPPRLKRTDTAKTIPTPTPTRAVADPAAVPDPMDTTSGLGRLVQELDAAVSAEARKTAEAAAADAPAEQGDKGDKGKAENGKPAAKPQRSAKQKR.

Helical transmembrane passes span 1 to 21, 42 to 62, 84 to 104, 126 to 146, 156 to 176, 204 to 224, 239 to 259, 287 to 307, 334 to 354, 364 to 384, 390 to 410, and 414 to 434; these read MAIV…LYTA, MLSL…VLIA, GAWL…DSVL, LFDE…VILF, IGKV…IVGV, AAGI…EALY, WPFI…WMLA, AVIL…TGAF, LYIP…LAIF, YGLA…VYLW, VGAI…FIAS, and FLHG…VMYT. Disordered regions lie at residues 649 to 678 and 693 to 736; these read TDTA…DTTS and AEAR…KQKR. Low complexity-rich tracts occupy residues 660 to 677 and 700 to 709; these read PTRA…MDTT and EAAAADAPAE. The span at 710–721 shows a compositional bias: basic and acidic residues; it reads QGDKGDKGKAEN.

Belongs to the HAK/KUP transporter (TC 2.A.72) family.

Its subcellular location is the cell membrane. The enzyme catalyses K(+)(in) + H(+)(in) = K(+)(out) + H(+)(out). Transport of potassium into the cell. Likely operates as a K(+):H(+) symporter. This chain is Probable potassium transport system protein Kup 2, found in Bifidobacterium longum (strain NCC 2705).